A 219-amino-acid chain; its full sequence is FMN-dependent NADH:quinone oxidoreductase 2 (219 aa).

FMN is bound by residues serine 10 and 23–25 (SIS).

It belongs to the azoreductase type 1 family. As to quaternary structure, homodimer. It depends on FMN as a cofactor.

It carries out the reaction 2 a quinone + NADH + H(+) = 2 a 1,4-benzosemiquinone + NAD(+). The enzyme catalyses N,N-dimethyl-1,4-phenylenediamine + anthranilate + 2 NAD(+) = 2-(4-dimethylaminophenyl)diazenylbenzoate + 2 NADH + 2 H(+). In terms of biological role, quinone reductase that provides resistance to thiol-specific stress caused by electrophilic quinones. Also exhibits azoreductase activity. Catalyzes the reductive cleavage of the azo bond in aromatic azo compounds to the corresponding amines. The chain is FMN-dependent NADH:quinone oxidoreductase 2 from Colwellia psychrerythraea (strain 34H / ATCC BAA-681) (Vibrio psychroerythus).